Here is a 149-residue protein sequence, read N- to C-terminus: Squidulin (149 aa).

Ala1 carries the N-acetylalanine modification. EF-hand domains are found at residues 7–42 (KQIA…LGRT), 43–78 (PSDA…QMGP), 80–115 (DPEK…FSDE), and 117–149 (LTSE…MTPK). Positions 20, 22, 24, 26, 31, 56, 58, 60, 62, 67, 93, 95, 97, 104, 130, 132, 134, 136, and 141 each coordinate Ca(2+).

Belongs to the calmodulin family.

In terms of biological role, not known. This protein has four functional calcium-binding sites. In Doryteuthis pealeii (Longfin inshore squid), this protein is Squidulin.